The chain runs to 242 residues: Cysteine-rich venom protein VAR11 (242 aa).

Residues 1–19 form the signal peptide; the sequence is MILLKLYLTLAAILCQSRG. Residues 41–169 form the SCP domain; sequence NKHNDLRRTV…SLKYFQVCQY (129 aa). Cystine bridges form between Cys-77-Cys-156, Cys-95-Cys-170, Cys-151-Cys-167, Cys-189-Cys-196, Cys-192-Cys-201, Cys-205-Cys-237, Cys-214-Cys-231, and Cys-223-Cys-235. Residues 205-237 form the ShKT domain; it reads CAYNDDYTSCPDLTKQVGCNHPVTANCKASCQC.

It belongs to the CRISP family. Expressed by the venom gland.

It localises to the secreted. Blocks ryanodine receptors, and potassium channels. The chain is Cysteine-rich venom protein VAR11 from Varanus varius (Lace monitor lizard).